Reading from the N-terminus, the 382-residue chain is Homoserine O-succinyltransferase (382 aa).

The AB hydrolase-1 domain maps to 51–359 (NAVLICHALS…DAPWGHDAFL (309 aa)). Residue S157 is the Nucleophile of the active site. Substrate is bound at residue R227. Active-site residues include D322 and H355. Substrate is bound at residue D356.

This sequence belongs to the AB hydrolase superfamily. MetX family. As to quaternary structure, homodimer.

Its subcellular location is the cytoplasm. It carries out the reaction L-homoserine + succinyl-CoA = O-succinyl-L-homoserine + CoA. It functions in the pathway amino-acid biosynthesis; L-methionine biosynthesis via de novo pathway; O-succinyl-L-homoserine from L-homoserine: step 1/1. In terms of biological role, transfers a succinyl group from succinyl-CoA to L-homoserine, forming succinyl-L-homoserine. The protein is Homoserine O-succinyltransferase of Marinobacter nauticus (strain ATCC 700491 / DSM 11845 / VT8) (Marinobacter aquaeolei).